The primary structure comprises 875 residues: MMLPPKYDHRAVEANRYEWWLKGKFFEATSDETKKPFTIVIPPPNVTGKLHLGHAWDTTLQDIITRMKRMQGYDVLWLPGMDHAGIATQAKVEEKLRNEGKTRYDLGREKFVEETWKWKEEYAGHIRSQWAKLGLGLDYTRERFTLDEGLSKAVREVFVSLYKKGLIYRGEYIINWDPVTKTALSDIEVVYKDVQGALYHMRYPLADGSGYIEVATTRPETMLGDTAVAVHPEDERYKHLIGKTVILPIVGREIPIIGDEYVDMSFGSGAVKITPAHDPNDFEIGNRHHLPRILVMNEDGTMNDNALQYKGLDRFECRKQIVKDLQEQGVLFKIEEHMHSVGHSERSGAVVEPYLSTQWFVKMKPLAEAAIEQQKTEGKVNFVPERFEKTYLHWMENIRDWCISRQLWWGHRIPAWYHKETGEVYVDHEPPADIENWEQDQDVLDTWFSSALWPFSTMGWPDKTSADYNRYYPTDVLVTGYDIIFFWVSRMIFQALEFTGKRPFKDVLIHGLVRDAQGRKMSKSLGNGVDPMDVIDQYGADSLRYFLATGSSPGQDLRFSTEKVEATWNFVNKIWNASRFALMNMEGFTYEDIDLHGEKSVADHWILTRLNETIETVTKLADKYEFGEVGRVLYNFIWDDLCDWYIEMAKLPLYGDDEQAKKTTRSVLAYVLDQTMRLLHPFMPFVTEEIWQQLPHEGESITVASWPQVRPELSNHEAAETMRLLVDIIRAVRNIRAEVNTPLSKPITLYIKAKDEHVKATLETNRAYIERFCNPSELVIDTTIPTVEKAMTAVVTGAELSLPLEGLINIEEEVKRLEKELQKLDQEVERVQKKLSNEGFLAKAPAHVVEEERKKERDYIEKREAVRARLAQLKQ.

A 'HIGH' region motif is present at residues 44–54; the sequence is PNVTGKLHLGH. The 'KMSKS' region signature appears at 520-524; sequence KMSKS. An ATP-binding site is contributed by Lys-523. Residues 804–875 adopt a coiled-coil conformation; the sequence is LEGLINIEEE…VRARLAQLKQ (72 aa).

This sequence belongs to the class-I aminoacyl-tRNA synthetase family. ValS type 1 subfamily. As to quaternary structure, monomer.

The protein localises to the cytoplasm. The enzyme catalyses tRNA(Val) + L-valine + ATP = L-valyl-tRNA(Val) + AMP + diphosphate. Catalyzes the attachment of valine to tRNA(Val). As ValRS can inadvertently accommodate and process structurally similar amino acids such as threonine, to avoid such errors, it has a 'posttransfer' editing activity that hydrolyzes mischarged Thr-tRNA(Val) in a tRNA-dependent manner. This chain is Valine--tRNA ligase, found in Anoxybacillus flavithermus (strain DSM 21510 / WK1).